We begin with the raw amino-acid sequence, 351 residues long: Histidinol-phosphate aminotransferase (351 aa).

Residue Lys213 is modified to N6-(pyridoxal phosphate)lysine.

It belongs to the class-II pyridoxal-phosphate-dependent aminotransferase family. Histidinol-phosphate aminotransferase subfamily. In terms of assembly, homodimer. The cofactor is pyridoxal 5'-phosphate.

It carries out the reaction L-histidinol phosphate + 2-oxoglutarate = 3-(imidazol-4-yl)-2-oxopropyl phosphate + L-glutamate. The protein operates within amino-acid biosynthesis; L-histidine biosynthesis; L-histidine from 5-phospho-alpha-D-ribose 1-diphosphate: step 7/9. The sequence is that of Histidinol-phosphate aminotransferase from Clostridium kluyveri (strain NBRC 12016).